Reading from the N-terminus, the 193-residue chain is MATNLKSIAKLQKPIQYDKVIEVDRIFADPAFIEQHRQRILASFKDAKESALYHELTHIVIKDNLFSAAMNEIVSYFEFQINPEELKNVVEGLKRDVVKDADEKTIQSIAEKIIKKALVFNFLQKEWKVEVSDDIVKRVISLYYEKTNQNVREYLDDKQKFEGIRTALIEERMVLETINHFKFHFNLTGQLPS.

This is an uncharacterized protein from Mycoplasma genitalium (strain ATCC 33530 / DSM 19775 / NCTC 10195 / G37) (Mycoplasmoides genitalium).